A 362-amino-acid chain; its full sequence is P2Y purinoceptor 1 (362 aa).

The Extracellular portion of the chain corresponds to 1–40; it reads MTEALISAALNGTQPELLAGGWAAGNASTKCSLTKTGFQF. 2 N-linked (GlcNAc...) asparagine glycosylation sites follow: N11 and N26. 2 cysteine pairs are disulfide-bonded: C31/C285 and C113/C191. An ADP-binding site is contributed by K35. Residues 41–63 traverse the membrane as a helical segment; that stretch reads YYLPTVYILVFITGFLGNSVAIW. Topologically, residues 64–76 are cytoplasmic; the sequence is MFVFHMRPWSGIS. The helical transmembrane segment at 77–98 threads the bilayer; the sequence is VYMFNLALADFLYVLTLPALIF. Residues 99-114 are Extracellular-facing; it reads YYFNKTDWIFGDVMCK. The N-linked (GlcNAc...) asparagine glycan is linked to N102. A helical membrane pass occupies residues 115-136; sequence LQRFIFHVNLYGSILFLTCISV. Residues 137 to 155 lie on the Cytoplasmic side of the membrane; that stretch reads HRYTGVVHPLKSLGRLKKK. Residues 156-177 traverse the membrane as a helical segment; sequence NAVYVSSLVWALVVAVIAPILF. Topologically, residues 178 to 203 are extracellular; the sequence is YSGTGVRRNKTITCYDTTADEYLRSY. Residue N186 is glycosylated (N-linked (GlcNAc...) asparagine). An ADP-binding site is contributed by 192–194; that stretch reads YDT. The chain crosses the membrane as a helical span at residues 204-226; the sequence is FVYSMCTTVFMFCIPFIVILGCY. The Cytoplasmic portion of the chain corresponds to 227–249; that stretch reads GLIVKALIYKDLDNSPLRRKSIY. Residues 250 to 273 form a helical membrane-spanning segment; that stretch reads LVIIVLTVFAVSYLPFHVMKTLNL. ADP is bound by residues 272–276, 292–295, and R299; these read NLRAR and YATY. Residues 274–292 are Extracellular-facing; the sequence is RARLDFQTPQMCAFNDKVY. A helical membrane pass occupies residues 293–314; it reads ATYQVTRGLASLNSCVDPILYF. Residues 315–362 lie on the Cytoplasmic side of the membrane; it reads LAGDTFRRRLSRATRKSSRRSEPNVQSKSEEMTLNILTEYKQNGDTSL.

This sequence belongs to the G-protein coupled receptor 1 family. Mainly found in blood, brain, and lung. To a lesser extent in stomach, gut and skeletal muscle.

The protein resides in the cell membrane. Receptor for extracellular adenine nucleotides such as ADP. In platelets, binding to ADP leads to mobilization of intracellular calcium ions via activation of phospholipase C, a change in platelet shape, and ultimately platelet aggregation. The sequence is that of P2Y purinoceptor 1 (P2RY1) from Meleagris gallopavo (Wild turkey).